We begin with the raw amino-acid sequence, 258 residues long: Alpha-fibrinogenase-like (258 aa).

The N-terminal stretch at 1–18 (MVLIRVLANLLVLQLSYA) is a signal peptide. Positions 19–24 (QKSSEL) are excised as a propeptide. The Peptidase S1 domain occupies 25 to 249 (VVGGHPCNIY…YTDWIHSIIA (225 aa)). 6 disulfides stabilise this stretch: cysteine 31–cysteine 163, cysteine 50–cysteine 66, cysteine 98–cysteine 256, cysteine 142–cysteine 210, cysteine 174–cysteine 189, and cysteine 200–cysteine 225. Asparagine 44 is a glycosylation site (N-linked (GlcNAc...) asparagine). Residues histidine 65 and aspartate 110 each act as charge relay system in the active site. Serine 204 (charge relay system) is an active-site residue.

Belongs to the peptidase S1 family. Snake venom subfamily. As to quaternary structure, monomer. As to expression, expressed by the venom gland.

It is found in the secreted. Functionally, degrades alpha chain of fibrinogen (FGA), and has strong caseinolytic activity. Cleaves oxidized insulin B-chain at '40-Tyr-|-Leu-41', '48-Phe-|-Phe-49' and '49-Phe-|-Tyr-50', and glucagon at the bonds '62-Tyr-|-Ser-63', 66-Leu-|-Asp-67' and '78-Leu-|-Met-79' bonds. This is Alpha-fibrinogenase-like from Daboia siamensis (Eastern Russel's viper).